A 235-amino-acid polypeptide reads, in one-letter code: Phosphoribosylaminoimidazole-succinocarboxamide synthase (235 aa).

Belongs to the SAICAR synthetase family.

The enzyme catalyses 5-amino-1-(5-phospho-D-ribosyl)imidazole-4-carboxylate + L-aspartate + ATP = (2S)-2-[5-amino-1-(5-phospho-beta-D-ribosyl)imidazole-4-carboxamido]succinate + ADP + phosphate + 2 H(+). It functions in the pathway purine metabolism; IMP biosynthesis via de novo pathway; 5-amino-1-(5-phospho-D-ribosyl)imidazole-4-carboxamide from 5-amino-1-(5-phospho-D-ribosyl)imidazole-4-carboxylate: step 1/2. This chain is Phosphoribosylaminoimidazole-succinocarboxamide synthase, found in Clostridium novyi (strain NT).